We begin with the raw amino-acid sequence, 142 residues long: Putative pre-16S rRNA nuclease (142 aa).

The protein belongs to the YqgF nuclease family.

It is found in the cytoplasm. In terms of biological role, could be a nuclease involved in processing of the 5'-end of pre-16S rRNA. The protein is Putative pre-16S rRNA nuclease of Chlorobaculum tepidum (strain ATCC 49652 / DSM 12025 / NBRC 103806 / TLS) (Chlorobium tepidum).